The sequence spans 118 residues: Large ribosomal subunit protein bL20 (118 aa).

It belongs to the bacterial ribosomal protein bL20 family.

Its function is as follows. Binds directly to 23S ribosomal RNA and is necessary for the in vitro assembly process of the 50S ribosomal subunit. It is not involved in the protein synthesizing functions of that subunit. The sequence is that of Large ribosomal subunit protein bL20 from Ralstonia pickettii (strain 12J).